Consider the following 226-residue polypeptide: Protein GrpE (226 aa).

Disordered stretches follow at residues M1–R24 and G205–A226. Residues N217–A226 are compositionally biased toward polar residues.

It belongs to the GrpE family. In terms of assembly, homodimer.

It is found in the cytoplasm. Functionally, participates actively in the response to hyperosmotic and heat shock by preventing the aggregation of stress-denatured proteins, in association with DnaK and GrpE. It is the nucleotide exchange factor for DnaK and may function as a thermosensor. Unfolded proteins bind initially to DnaJ; upon interaction with the DnaJ-bound protein, DnaK hydrolyzes its bound ATP, resulting in the formation of a stable complex. GrpE releases ADP from DnaK; ATP binding to DnaK triggers the release of the substrate protein, thus completing the reaction cycle. Several rounds of ATP-dependent interactions between DnaJ, DnaK and GrpE are required for fully efficient folding. This is Protein GrpE from Brucella melitensis biotype 1 (strain ATCC 23456 / CCUG 17765 / NCTC 10094 / 16M).